A 237-amino-acid chain; its full sequence is Pyridoxal phosphate homeostasis protein (237 aa).

An N6-(pyridoxal phosphate)lysine modification is found at K35.

The protein belongs to the pyridoxal phosphate-binding protein YggS/PROSC family.

In terms of biological role, pyridoxal 5'-phosphate (PLP)-binding protein, which is involved in PLP homeostasis. This Haemophilus influenzae (strain ATCC 51907 / DSM 11121 / KW20 / Rd) protein is Pyridoxal phosphate homeostasis protein.